The chain runs to 136 residues: Histone H2A (136 aa).

Residues 1–11 are compositionally biased toward gly residues; sequence MTGGGKSGGKA. The interval 1–24 is disordered; sequence MTGGGKSGGKASGSKNAQSRSSKA. 2 positions are modified to N6-acetyllysine: K6 and K10. Q107 carries the post-translational modification N5-methylglutamine. S133 is modified (phosphoserine). Positions 133–134 match the [ST]-Q motif motif; sequence SQ.

Belongs to the histone H2A family. As to quaternary structure, the nucleosome is a histone octamer containing two molecules each of H2A, H2B, H3 and H4 assembled in one H3-H4 heterotetramer and two H2A-H2B heterodimers. The octamer wraps approximately 147 bp of DNA. Post-translationally, phosphorylated to form H2AS128ph (gamma-H2A) in response to DNA double-strand breaks (DSBs) generated by exogenous genotoxic agents and by stalled replication forks. Phosphorylation is dependent on the DNA damage checkpoint kinases MEC1/ATR and TEL1/ATM, spreads on either side of a detected DSB site and may mark the surrounding chromatin for recruitment of proteins required for DNA damage signaling and repair. Gamma-H2A is removed from the DNA prior to the strand invasion-primer extension step of the repair process and subsequently dephosphorylated. Dephosphorylation is necessary for efficient recovery from the DNA damage checkpoint. Acetylated by ESA1 to form H2AK4ac and H2AK7ac.

The protein localises to the nucleus. The protein resides in the chromosome. Core component of nucleosome which plays a central role in DNA double strand break (DSB) repair. Nucleosomes wrap and compact DNA into chromatin, limiting DNA accessibility to the cellular machineries which require DNA as a template. Histones thereby play a central role in transcription regulation, DNA repair, DNA replication and chromosomal stability. DNA accessibility is regulated via a complex set of post-translational modifications of histones, also called histone code, and nucleosome remodeling. The polypeptide is Histone H2A (HTA1) (Pyricularia oryzae (strain Y34) (Rice blast fungus)).